Reading from the N-terminus, the 145-residue chain is Nickel-responsive regulator (145 aa).

Residues His-77, His-88, His-90, and Cys-96 each contribute to the Ni(2+) site.

The protein belongs to the transcriptional regulatory CopG/NikR family. Homotetramer. The cofactor is Ni(2+).

Transcriptional repressor of the nikABCDE operon. Is active in the presence of excessive concentrations of intracellular nickel. The chain is Nickel-responsive regulator from Edwardsiella ictaluri (strain 93-146).